The following is a 78-amino-acid chain: UPF0335 protein RBE_1185 (78 aa).

It belongs to the UPF0335 family.

This is UPF0335 protein RBE_1185 from Rickettsia bellii (strain RML369-C).